A 732-amino-acid polypeptide reads, in one-letter code: 1,4-alpha-glucan branching enzyme GlgB (732 aa).

The Nucleophile role is filled by Asp412. The active-site Proton donor is the Glu465.

This sequence belongs to the glycosyl hydrolase 13 family. GlgB subfamily. As to quaternary structure, monomer.

It carries out the reaction Transfers a segment of a (1-&gt;4)-alpha-D-glucan chain to a primary hydroxy group in a similar glucan chain.. It participates in glycan biosynthesis; glycogen biosynthesis. Catalyzes the formation of the alpha-1,6-glucosidic linkages in glycogen by scission of a 1,4-alpha-linked oligosaccharide from growing alpha-1,4-glucan chains and the subsequent attachment of the oligosaccharide to the alpha-1,6 position. This Pseudomonas aeruginosa (strain ATCC 15692 / DSM 22644 / CIP 104116 / JCM 14847 / LMG 12228 / 1C / PRS 101 / PAO1) protein is 1,4-alpha-glucan branching enzyme GlgB.